The chain runs to 428 residues: MDTIFALATAQGKAGVAVIRLSGPRAYHTACLLAGPDLPSRGLSVRQLKDSQGARLDDGVVLTFAAPASFTGEDVAEFQIHGSLATTEAVLRCLGDLDGLRLAEPGEFTRRALENGKMSLPQVEGLADLIDAETEAQRKQAQAVLNGALGQLAEGWRAKLIRAAALLEAVIDFADEEVPTDVSPEVRALLAEVRADLEHEIAGVRIAERIRTGFEVAIIGPPNAGKSTLLNMLAGREAALTSEVAGTTRDVIEVRMDLGGLPVTLLDTAGLRETGDLVEGMGIALARRRADQADLRVFLTEDVDAMGVELQPDDLHVLPKADQRPDTANAISGVTGQGVDQLVQRISDVLKTRSSSAGIATRERHRVAMKTALDALDRTGTVLESGPDLYDIAAEELRTAIRALESLVGRIGVETLLDEIFASFCLGK.

3 residues coordinate (6S)-5-formyl-5,6,7,8-tetrahydrofolate: R20, E77, and K117. Positions 213 to 351 (GFEVAIIGPP…LVQRISDVLK (139 aa)) constitute a TrmE-type G domain. N223 serves as a coordination point for K(+). Residues 223–228 (NAGKST), 242–248 (SEVAGTT), and 267–270 (DTAG) each bind GTP. S227 contributes to the Mg(2+) binding site. The K(+) site is built by S242, V244, and T247. A Mg(2+)-binding site is contributed by T248. K428 contacts (6S)-5-formyl-5,6,7,8-tetrahydrofolate.

The protein belongs to the TRAFAC class TrmE-Era-EngA-EngB-Septin-like GTPase superfamily. TrmE GTPase family. In terms of assembly, homodimer. Heterotetramer of two MnmE and two MnmG subunits. Requires K(+) as cofactor.

The protein resides in the cytoplasm. Functionally, exhibits a very high intrinsic GTPase hydrolysis rate. Involved in the addition of a carboxymethylaminomethyl (cmnm) group at the wobble position (U34) of certain tRNAs, forming tRNA-cmnm(5)s(2)U34. The protein is tRNA modification GTPase MnmE of Ruegeria pomeroyi (strain ATCC 700808 / DSM 15171 / DSS-3) (Silicibacter pomeroyi).